The sequence spans 457 residues: Adenylosuccinate synthetase isozyme 1 (457 aa).

The segment at 1–25 (MSGTRASNDRPPSAGGVKRGRLQHE) is disordered. GTP-binding positions include 42 to 48 (GDEGKGK) and 70 to 72 (GHT). Residue Asp43 is the Proton acceptor of the active site. Residues Asp43 and Gly70 each coordinate Mg(2+). Residue Asp43 coordinates substrate. IMP contacts are provided by residues 43-46 (DEGK), 68-71 (NAGH), Thr163, Arg177, Asn256, Thr271, and Arg335. His71 serves as the catalytic Proton donor. 331-337 (VTTGRKR) lines the substrate pocket. GTP-binding positions include Arg337, 363 to 365 (KLD), and 445 to 448 (GVGK).

This sequence belongs to the adenylosuccinate synthetase family. In terms of assembly, homodimer. It depends on Mg(2+) as a cofactor. In terms of tissue distribution, predominantly expressed in the striated muscle tissues.

It is found in the cytoplasm. The catalysed reaction is IMP + L-aspartate + GTP = N(6)-(1,2-dicarboxyethyl)-AMP + GDP + phosphate + 2 H(+). Its pathway is purine metabolism; AMP biosynthesis via de novo pathway; AMP from IMP: step 1/2. Functionally, component of the purine nucleotide cycle (PNC), which interconverts IMP and AMP to regulate the nucleotide levels in various tissues, and which contributes to glycolysis and ammoniagenesis. Catalyzes the first committed step in the biosynthesis of AMP from IMP. The sequence is that of Adenylosuccinate synthetase isozyme 1 from Sus scrofa (Pig).